Reading from the N-terminus, the 37-residue chain is U1-theraphotoxin-Hs1b (37 aa).

3 disulfides stabilise this stretch: Cys-4–Cys-18, Cys-8–Cys-29, and Cys-23–Cys-34.

As to quaternary structure, form 1 and form 2 may dimerize. As to expression, expressed by the venom gland.

The protein localises to the secreted. Its function is as follows. Lethal neurotoxin that blocks neuromuscular transmission. Acts cooperatively to potentiate the activity of huwentoxin-I. The polypeptide is U1-theraphotoxin-Hs1b (Cyriopagopus schmidti (Chinese bird spider)).